The primary structure comprises 626 residues: Chaperone protein HtpG (626 aa).

An a; substrate-binding region spans residues 1 to 339; that stretch reads MSTNQETRGF…SNDLPLNVSR (339 aa). The segment at 340 to 555 is b; that stretch reads EILQDNKVTA…NDQMTTQMAK (216 aa). Residues 556 to 626 form a c region; that stretch reads LFAAAGQPVP…FIKRINKLLG (71 aa).

Belongs to the heat shock protein 90 family. Homodimer.

The protein localises to the cytoplasm. Functionally, molecular chaperone. Has ATPase activity. The protein is Chaperone protein HtpG of Aggregatibacter actinomycetemcomitans (Actinobacillus actinomycetemcomitans).